Consider the following 535-residue polypeptide: SIR4-interacting protein SIF2 (535 aa).

One can recognise a LisH domain in the interval 4–36 (TSEELNYLIWRYCQEMGHEVSALALQDETRVLE). Residues 104 to 140 (EGRFTLETNSESNKAGEDGASTVERETQEDDTNSIDS) are disordered. Acidic residues predominate over residues 130–140 (TQEDDTNSIDS). Ser-137 is subject to Phosphoserine. WD repeat units follow at residues 155–186 (VKLD…RLAR), 218–248 (KTTN…RLWN), 259–289 (FHRA…ILWN), 316–345 (GDGS…FVYQ), 357–387 (GHHG…RIWH), 399–428 (GHSQ…RLWS), 440–470 (VDGV…NVYD), and 503–534 (SQDN…SVVA).

As to quaternary structure, homotetramer. Interacts with SIR4 N-terminal domain. Interacts with a complex composed of SIN3 and RPD3. Identified in the Set3C complex with HOS2, HST1, SNT1, CPR1, HOS4/YIL112W and SET3.

It is found in the nucleus. In terms of biological role, antagonizes telomeric silencing in yeast. May recruit SIR4 to non-telomeric sites or repression. In Saccharomyces cerevisiae (strain ATCC 204508 / S288c) (Baker's yeast), this protein is SIR4-interacting protein SIF2 (SIF2).